Here is a 504-residue protein sequence, read N- to C-terminus: MSSTLLEQTRSNHEEVERLERLVVEDLQKEPPSSKDRLVQGHRVRHMIESIMLTTEKLVETYEDKDGAWDDEIAALGGQTATGTNVFSEFYDRLKEIREYHKRHPSGRLVDANEDYEARLKEEPIIAFSGEEGNGRYLDLHDMYNQYINSKFGERVEYSAYLDVFSQPEKIPRKLKLSRQYMKYMEALLEYLVYFFQRTEPLQDLDRILSKVCSDFEEQYADGIVEGLDNELIPSQHTVIDLDYYSTVEELVDVGPEKLKEALGALGLKVGGTPQQRAERLFLTKHTPLEKLDKKHFARPPHNGKQNGDAKSTHESENAKEIALTEAKVKKLCNLLDETIERTKQNIVKKQSLTYEEMEGEREGEEANTELESDDEDGLIYNPLKLPIGWDGKPIPYWLYKLHGLGQEFKCEICGNYSYWGRRAFERHFKEWRHQHGMRCLGIPNTKNFNEITSIEEAKELWKRIQERQGVNKWRPELEEEYEDREGNIYNKKTYSDLQRQGLI.

Ser2 bears the N-acetylserine mark. 2 disordered regions span residues 293–319 (DKKH…SENA) and 355–374 (YEEM…LESD). Residues 356–374 (EEMEGEREGEEANTELESD) are compositionally biased toward acidic residues. The residue at position 373 (Ser373) is a Phosphoserine. Residues 409-440 (FKCEICGNYSYWGRRAFERHFKEWRHQHGMRC) form a Matrin-type zinc finger.

Belongs to the SF3A3 family. Expressed at moderate levels in all sporophytic tissues with strongest expression in gametophytes.

The protein localises to the nucleus. Functionally, splicing factor homolog to SF3a60 that may be involved in pre-spliceosome formation. Is necessary for gametic cell fate determination. In Arabidopsis thaliana (Mouse-ear cress), this protein is Splicing factor SF3a60 homolog.